Reading from the N-terminus, the 172-residue chain is Stellate protein CG33239/CG33241 (172 aa).

It belongs to the casein kinase 2 subunit beta family. In terms of assembly, interacts in vitro with the casein kinase 2 alpha subunit (CkII-alpha). The relevance of such interaction is however unclear in vivo. Probably not expressed in wild-type flies. In males lacking the Y chromosome, it is testis-specific and constitutes the main component of star-shaped crystals.

Functionally, unknown. In males lacking the Y chromosome, its strong overexpression leads to the appearance of proteinaceous star-shaped crystals in the primary spermatocytes causing meiotic drive, possibly by interfering with normal casein kinase 2 activity. This chain is Stellate protein CG33239/CG33241 (Ste:CG33239), found in Drosophila melanogaster (Fruit fly).